Consider the following 1183-residue polypeptide: PAN2-PAN3 deadenylation complex catalytic subunit PAN2 (1183 aa).

WD repeat units follow at residues 150-189 (SIENSSPVVKLAPLHRTVLAAGLSGQVTVLDPRTGFKAAQ) and 289-328 (DVSSYITSMALSSRGDYLAFGDGDGQLHVWTTNETGENAA). A linker region spans residues 331 to 478 (ENGSIVLPPF…EEIEEELNDG (148 aa)). The interval 439–470 (AEGRARGKGRRDSGPRFRSEKDKKGTYKDKEE) is disordered. Residues 448 to 469 (RRDSGPRFRSEKDKKGTYKDKE) are compositionally biased toward basic and acidic residues. The USP domain occupies 479–864 (EVPKYYRKVE…VPAVIILERE (386 aa)). The region spanning 916-1085 (VAIDAEFVAL…HDSIEDAHFA (170 aa)) is the Exonuclease domain. A divalent metal cation contacts are provided by D919, E921, D1028, and D1081. The disordered stretch occupies residues 1155–1183 (KSRMATPPPPTKLGLPQWASQNSPSPLRR). A compositionally biased stretch (polar residues) spans 1172–1183 (WASQNSPSPLRR).

The protein belongs to the peptidase C19 family. PAN2 subfamily. As to quaternary structure, forms a heterotrimer with an asymmetric homodimer of the regulatory subunit PAN3 to form the poly(A)-nuclease (PAN) deadenylation complex. The cofactor is a divalent metal cation.

It localises to the cytoplasm. It catalyses the reaction Exonucleolytic cleavage of poly(A) to 5'-AMP.. Positively regulated by the regulatory subunit PAN3. Functionally, catalytic subunit of the poly(A)-nuclease (PAN) deadenylation complex, one of two cytoplasmic mRNA deadenylases involved in mRNA turnover. PAN specifically shortens poly(A) tails of RNA and the activity is stimulated by poly(A)-binding protein PAB1. PAN deadenylation is followed by rapid degradation of the shortened mRNA tails by the CCR4-NOT complex. Deadenylated mRNAs are then degraded by two alternative mechanisms, namely exosome-mediated 3'-5' exonucleolytic degradation, or deadenylation-dependent mRNA decaping and subsequent 5'-3' exonucleolytic degradation by XRN1. May also be involved in post-transcriptional maturation of mRNA poly(A) tails. This is PAN2-PAN3 deadenylation complex catalytic subunit PAN2 from Cryptococcus neoformans var. neoformans serotype D (strain B-3501A) (Filobasidiella neoformans).